A 447-amino-acid polypeptide reads, in one-letter code: Argininosuccinate synthase (447 aa).

ATP is bound by residues Ala-17–Ser-25 and Ala-43. An L-citrulline-binding site is contributed by Tyr-99. Positions 129 and 131 each coordinate ATP. L-aspartate-binding residues include Thr-131, Asn-135, and Asp-136. Asn-135 serves as a coordination point for L-citrulline. Asp-136 lines the ATP pocket. L-citrulline contacts are provided by Arg-139 and Ser-192. Asp-194 provides a ligand contact to ATP. Residues Thr-201, Glu-203, and Glu-280 each contribute to the L-citrulline site.

Belongs to the argininosuccinate synthase family. Type 2 subfamily. Homotetramer.

It is found in the cytoplasm. The enzyme catalyses L-citrulline + L-aspartate + ATP = 2-(N(omega)-L-arginino)succinate + AMP + diphosphate + H(+). It functions in the pathway amino-acid biosynthesis; L-arginine biosynthesis; L-arginine from L-ornithine and carbamoyl phosphate: step 2/3. This is Argininosuccinate synthase from Shigella dysenteriae serotype 1 (strain Sd197).